Here is a 910-residue protein sequence, read N- to C-terminus: DNA mismatch repair protein MutS (910 aa).

615–622 (GPNMAGKS) contributes to the ATP binding site.

It belongs to the DNA mismatch repair MutS family.

This protein is involved in the repair of mismatches in DNA. It is possible that it carries out the mismatch recognition step. This protein has a weak ATPase activity. The chain is DNA mismatch repair protein MutS from Clostridium perfringens (strain ATCC 13124 / DSM 756 / JCM 1290 / NCIMB 6125 / NCTC 8237 / Type A).